The sequence spans 300 residues: Protease HtpX homolog (300 aa).

The next 2 membrane-spanning stretches (helical) occupy residues 7 to 24 (GILMAVMTALFLGVGALI) and 29 to 46 (GAIIALVIAAGMNLFTFW). Residue histidine 130 participates in Zn(2+) binding. Glutamate 131 is an active-site residue. Histidine 134 is a binding site for Zn(2+). Transmembrane regions (helical) follow at residues 145-165 (VTATFAGAISMLANFAFFFGG) and 174-194 (PMGLVGTLALMFLAPLAAGLV). Residue glutamate 203 participates in Zn(2+) binding.

This sequence belongs to the peptidase M48B family. Requires Zn(2+) as cofactor.

The protein resides in the cell inner membrane. In Cereibacter sphaeroides (strain ATCC 17029 / ATH 2.4.9) (Rhodobacter sphaeroides), this protein is Protease HtpX homolog.